A 156-amino-acid polypeptide reads, in one-letter code: 6,7-dimethyl-8-ribityllumazine synthase (156 aa).

5-amino-6-(D-ribitylamino)uracil is bound by residues F25, 59-61 (AWE), and 83-85 (AVI). 88-89 (ST) is a binding site for (2S)-2-hydroxy-3-oxobutyl phosphate. Catalysis depends on H91, which acts as the Proton donor. N116 contributes to the 5-amino-6-(D-ribitylamino)uracil binding site. R130 provides a ligand contact to (2S)-2-hydroxy-3-oxobutyl phosphate.

Belongs to the DMRL synthase family. Forms an icosahedral capsid composed of 60 subunits, arranged as a dodecamer of pentamers.

It catalyses the reaction (2S)-2-hydroxy-3-oxobutyl phosphate + 5-amino-6-(D-ribitylamino)uracil = 6,7-dimethyl-8-(1-D-ribityl)lumazine + phosphate + 2 H2O + H(+). It participates in cofactor biosynthesis; riboflavin biosynthesis; riboflavin from 2-hydroxy-3-oxobutyl phosphate and 5-amino-6-(D-ribitylamino)uracil: step 1/2. Catalyzes the formation of 6,7-dimethyl-8-ribityllumazine by condensation of 5-amino-6-(D-ribitylamino)uracil with 3,4-dihydroxy-2-butanone 4-phosphate. This is the penultimate step in the biosynthesis of riboflavin. This is 6,7-dimethyl-8-ribityllumazine synthase from Acinetobacter baylyi (strain ATCC 33305 / BD413 / ADP1).